The primary structure comprises 88 residues: Small ribosomal subunit protein uS17 (88 aa).

Belongs to the universal ribosomal protein uS17 family. As to quaternary structure, part of the 30S ribosomal subunit.

Functionally, one of the primary rRNA binding proteins, it binds specifically to the 5'-end of 16S ribosomal RNA. In Pseudomonas savastanoi pv. phaseolicola (strain 1448A / Race 6) (Pseudomonas syringae pv. phaseolicola (strain 1448A / Race 6)), this protein is Small ribosomal subunit protein uS17.